We begin with the raw amino-acid sequence, 458 residues long: Bifunctional protein GlmU (458 aa).

Residues 1-229 (MNKFAIVLAA…FDESLGVNDR (229 aa)) are pyrophosphorylase. UDP-N-acetyl-alpha-D-glucosamine is bound by residues 8–11 (LAAG), Lys-22, Gln-72, and 77–78 (GT). Asp-102 is a binding site for Mg(2+). UDP-N-acetyl-alpha-D-glucosamine-binding residues include Gly-139, Glu-154, Asn-169, and Asn-227. Asn-227 provides a ligand contact to Mg(2+). A linker region spans residues 230–250 (VALSQAEATMRKRINHEHMVN). The N-acetyltransferase stretch occupies residues 251–458 (GVTLIDPATT…AKKMPHYRGQ (208 aa)). Residues Arg-332 and Lys-350 each coordinate UDP-N-acetyl-alpha-D-glucosamine. His-362 serves as the catalytic Proton acceptor. 2 residues coordinate UDP-N-acetyl-alpha-D-glucosamine: Tyr-365 and Asn-376. Acetyl-CoA is bound by residues Ala-379, Ser-404, Ala-422, and Arg-439.

This sequence in the N-terminal section; belongs to the N-acetylglucosamine-1-phosphate uridyltransferase family. In the C-terminal section; belongs to the transferase hexapeptide repeat family. In terms of assembly, homotrimer. Mg(2+) serves as cofactor.

It localises to the cytoplasm. The catalysed reaction is alpha-D-glucosamine 1-phosphate + acetyl-CoA = N-acetyl-alpha-D-glucosamine 1-phosphate + CoA + H(+). It catalyses the reaction N-acetyl-alpha-D-glucosamine 1-phosphate + UTP + H(+) = UDP-N-acetyl-alpha-D-glucosamine + diphosphate. Its pathway is nucleotide-sugar biosynthesis; UDP-N-acetyl-alpha-D-glucosamine biosynthesis; N-acetyl-alpha-D-glucosamine 1-phosphate from alpha-D-glucosamine 6-phosphate (route II): step 2/2. It participates in nucleotide-sugar biosynthesis; UDP-N-acetyl-alpha-D-glucosamine biosynthesis; UDP-N-acetyl-alpha-D-glucosamine from N-acetyl-alpha-D-glucosamine 1-phosphate: step 1/1. The protein operates within bacterial outer membrane biogenesis; LPS lipid A biosynthesis. Its function is as follows. Catalyzes the last two sequential reactions in the de novo biosynthetic pathway for UDP-N-acetylglucosamine (UDP-GlcNAc). The C-terminal domain catalyzes the transfer of acetyl group from acetyl coenzyme A to glucosamine-1-phosphate (GlcN-1-P) to produce N-acetylglucosamine-1-phosphate (GlcNAc-1-P), which is converted into UDP-GlcNAc by the transfer of uridine 5-monophosphate (from uridine 5-triphosphate), a reaction catalyzed by the N-terminal domain. The chain is Bifunctional protein GlmU from Lactococcus lactis subsp. cremoris (strain MG1363).